The chain runs to 360 residues: Viral protein TPX (360 aa).

The interval threonine 269–threonine 289 is disordered. The Thr-Pro(N) repeat unit spans residues valine 270–threonine 291. Over residues serine 275 to threonine 289 the composition is skewed to pro residues. A 3 Thr-Pro repeats regions and two near identical repeats region spans residues proline 278–threonine 353. The segment at residues tyrosine 292 to valine 301 is a repeat. A Thr-Pro(N) repeat occupies threonine 302–threonine 322. The stretch at residues tyrosine 323–valine 332 is a repeat. Residues valine 332–isoleucine 360 are disordered. The Thr-Pro(N) repeat unit spans residues threonine 333–threonine 353. Pro residues predominate over residues serine 335–threonine 351.

The chain is Viral protein TPX from Thermoproteus tenax (TTV1).